The sequence spans 883 residues: Valine--tRNA ligase (883 aa).

The 'HIGH' region motif lies at 52–62 (PNVTGRLHLGH). A 'KMSKS' region motif is present at residues 529-533 (KMSKS). Lysine 532 contacts ATP. The stretch at 813 to 848 (LEGLIDFDKEIKRLENELAKWTKEVERVQKKLSNQG) forms a coiled coil.

It belongs to the class-I aminoacyl-tRNA synthetase family. ValS type 1 subfamily. Monomer.

The protein resides in the cytoplasm. The enzyme catalyses tRNA(Val) + L-valine + ATP = L-valyl-tRNA(Val) + AMP + diphosphate. In terms of biological role, catalyzes the attachment of valine to tRNA(Val). As ValRS can inadvertently accommodate and process structurally similar amino acids such as threonine, to avoid such errors, it has a 'posttransfer' editing activity that hydrolyzes mischarged Thr-tRNA(Val) in a tRNA-dependent manner. This is Valine--tRNA ligase from Oceanobacillus iheyensis (strain DSM 14371 / CIP 107618 / JCM 11309 / KCTC 3954 / HTE831).